The following is a 650-amino-acid chain: tRNA-dihydrouridine(47) synthase [NAD(P)(+)]-like (650 aa).

Disordered regions lie at residues 1-24 and 46-120; these read MAEG…GALE and EAKG…NYDK. At A2 the chain carries N-acetylalanine. 2 stretches are compositionally biased toward basic and acidic residues: residues 48–58 and 70–79; these read KGQEKTCRETE and PEAKRIRLED. Residues 101 to 113 show a composition bias toward basic residues; sequence KRARGQNKGRPHV. 2 consecutive C3H1-type zinc fingers follow at residues 118-148 and 156-186; these read YDKN…HDVG and ADLG…HLRP. The disordered stretch occupies residues 235 to 284; sequence FSQGPTPAAAVPEGTAAEGAPRQENCGAQQVPAGPGTSTPPSSPVRTCGP. The residue at position 236 (S236) is a Phosphoserine. T273 is subject to Phosphothreonine. Phosphoserine is present on residues S276 and S277. FMN-binding positions include 311–313 and Q365; that span reads PLT. The active-site Proton donor is the C396. K416 participates in a covalent cross-link: Glycyl lysine isopeptide (Lys-Gly) (interchain with G-Cter in SUMO2). FMN is bound by residues K435, H465, 497-499, and 520-521; these read NGD and AR.

It belongs to the Dus family. Dus3 subfamily. FMN serves as cofactor.

The enzyme catalyses 5,6-dihydrouridine(47) in tRNA + NAD(+) = uridine(47) in tRNA + NADH + H(+). It catalyses the reaction 5,6-dihydrouridine(47) in tRNA + NADP(+) = uridine(47) in tRNA + NADPH + H(+). The catalysed reaction is a 5,6-dihydrouridine in mRNA + NAD(+) = a uridine in mRNA + NADH + H(+). It carries out the reaction a 5,6-dihydrouridine in mRNA + NADP(+) = a uridine in mRNA + NADPH + H(+). Its function is as follows. Catalyzes the synthesis of dihydrouridine, a modified base, in various RNAs, such as tRNAs, mRNAs and some long non-coding RNAs (lncRNAs). Mainly modifies the uridine in position 47 (U47) in the D-loop of most cytoplasmic tRNAs. Also able to mediate the formation of dihydrouridine in some mRNAs, thereby regulating their translation. The chain is tRNA-dihydrouridine(47) synthase [NAD(P)(+)]-like from Homo sapiens (Human).